The following is a 153-amino-acid chain: 6,7-dimethyl-8-ribityllumazine synthase (153 aa).

5-amino-6-(D-ribitylamino)uracil contacts are provided by residues F23, 57 to 59 (AYE), and 81 to 83 (AVI). 86 to 87 (AT) contacts (2S)-2-hydroxy-3-oxobutyl phosphate. Residue H89 is the Proton donor of the active site. F113 contacts 5-amino-6-(D-ribitylamino)uracil. R127 lines the (2S)-2-hydroxy-3-oxobutyl phosphate pocket.

This sequence belongs to the DMRL synthase family.

It catalyses the reaction (2S)-2-hydroxy-3-oxobutyl phosphate + 5-amino-6-(D-ribitylamino)uracil = 6,7-dimethyl-8-(1-D-ribityl)lumazine + phosphate + 2 H2O + H(+). It functions in the pathway cofactor biosynthesis; riboflavin biosynthesis; riboflavin from 2-hydroxy-3-oxobutyl phosphate and 5-amino-6-(D-ribitylamino)uracil: step 1/2. In terms of biological role, catalyzes the formation of 6,7-dimethyl-8-ribityllumazine by condensation of 5-amino-6-(D-ribitylamino)uracil with 3,4-dihydroxy-2-butanone 4-phosphate. This is the penultimate step in the biosynthesis of riboflavin. The chain is 6,7-dimethyl-8-ribityllumazine synthase from Leptospira borgpetersenii serovar Hardjo-bovis (strain JB197).